A 389-amino-acid chain; its full sequence is Chalcone synthase 5 (389 aa).

Cys164 is an active-site residue.

This sequence belongs to the thiolase-like superfamily. Chalcone/stilbene synthases family.

The catalysed reaction is (E)-4-coumaroyl-CoA + 3 malonyl-CoA + 3 H(+) = 2',4,4',6'-tetrahydroxychalcone + 3 CO2 + 4 CoA. It functions in the pathway secondary metabolite biosynthesis; flavonoid biosynthesis. Functionally, the primary product of this enzyme is 4,2',4',6'-tetrahydroxychalcone (also termed naringenin-chalcone or chalcone) which can under specific conditions spontaneously isomerize into naringenin. This chain is Chalcone synthase 5 (CHS5), found in Trifolium subterraneum (Subterranean clover).